The primary structure comprises 143 residues: Interleukin-3 (143 aa).

An N-terminal signal peptide occupies residues 1 to 23 (MSSFPILHLLLLLLGCQVPQAQG). Residue N79 is glycosylated (N-linked (GlcNAc...) asparagine).

This sequence belongs to the IL-3 family. As to quaternary structure, monomer.

The protein localises to the secreted. Functionally, granulocyte/macrophage colony-stimulating factors are cytokines that act in hematopoiesis by controlling the production, differentiation, and function of 2 related white cell populations of the blood, the granulocytes and the monocytes-macrophages. This CSF induces granulocytes, macrophages, mast cells, stem cells, erythroid cells, eosinophils and megakaryocytes. This chain is Interleukin-3 (IL3), found in Canis lupus familiaris (Dog).